The primary structure comprises 231 residues: ATP phosphoribosyltransferase (231 aa).

It belongs to the ATP phosphoribosyltransferase family. Short subfamily. As to quaternary structure, heteromultimer composed of HisG and HisZ subunits.

It localises to the cytoplasm. The catalysed reaction is 1-(5-phospho-beta-D-ribosyl)-ATP + diphosphate = 5-phospho-alpha-D-ribose 1-diphosphate + ATP. Its pathway is amino-acid biosynthesis; L-histidine biosynthesis; L-histidine from 5-phospho-alpha-D-ribose 1-diphosphate: step 1/9. Functionally, catalyzes the condensation of ATP and 5-phosphoribose 1-diphosphate to form N'-(5'-phosphoribosyl)-ATP (PR-ATP). Has a crucial role in the pathway because the rate of histidine biosynthesis seems to be controlled primarily by regulation of HisG enzymatic activity. This is ATP phosphoribosyltransferase from Brucella anthropi (strain ATCC 49188 / DSM 6882 / CCUG 24695 / JCM 21032 / LMG 3331 / NBRC 15819 / NCTC 12168 / Alc 37) (Ochrobactrum anthropi).